The primary structure comprises 701 residues: Vacuolar protein sorting-associated protein 52 B (701 aa).

2 coiled-coil regions span residues phenylalanine 23–glutamate 45 and glutamine 511–leucine 533.

This sequence belongs to the VPS52 family. Component of the Golgi-associated retrograde protein (GARP) complex. Detected in pollen.

It is found in the golgi apparatus. The protein resides in the trans-Golgi network membrane. The protein localises to the endosome membrane. It localises to the golgi apparatus membrane. In terms of biological role, may be involved in retrograde transport of early and late endosomes to the late Golgi. The protein is Vacuolar protein sorting-associated protein 52 B (P2) of Arabidopsis thaliana (Mouse-ear cress).